A 109-amino-acid chain; its full sequence is Urease subunit gamma (109 aa).

It belongs to the urease gamma subunit family. In terms of assembly, heterotrimer of UreA (gamma), UreB (beta) and UreC (alpha) subunits. Three heterotrimers associate to form the active enzyme.

It localises to the cytoplasm. The enzyme catalyses urea + 2 H2O + H(+) = hydrogencarbonate + 2 NH4(+). The protein operates within nitrogen metabolism; urea degradation; CO(2) and NH(3) from urea (urease route): step 1/1. The protein is Urease subunit gamma of Natronomonas pharaonis (strain ATCC 35678 / DSM 2160 / CIP 103997 / JCM 8858 / NBRC 14720 / NCIMB 2260 / Gabara) (Halobacterium pharaonis).